A 500-amino-acid polypeptide reads, in one-letter code: L-arabinose isomerase (500 aa).

Residues glutamate 306, glutamate 333, histidine 350, and histidine 450 each contribute to the Mn(2+) site.

The protein belongs to the arabinose isomerase family. Homohexamer. It depends on Mn(2+) as a cofactor.

The catalysed reaction is beta-L-arabinopyranose = L-ribulose. It functions in the pathway carbohydrate degradation; L-arabinose degradation via L-ribulose; D-xylulose 5-phosphate from L-arabinose (bacterial route): step 1/3. Catalyzes the conversion of L-arabinose to L-ribulose. This chain is L-arabinose isomerase, found in Shigella boydii serotype 18 (strain CDC 3083-94 / BS512).